We begin with the raw amino-acid sequence, 443 residues long: uncharacterized protein (443 aa).

The interval 1–21 (MQSVTPPPTQQGKPDPTNSDM) is disordered. Over residues 10–20 (QQGKPDPTNSD) the composition is skewed to polar residues.

This is an uncharacterized protein from Caenorhabditis elegans.